A 540-amino-acid polypeptide reads, in one-letter code: Transcription termination/antitermination protein NusA (540 aa).

The 71-residue stretch at 144–214 (GQVIEARVED…SMWPITLSRS (71 aa)) folds into the S1 motif domain. Residues 319–386 (DTSIEIVVPA…QGIFGIKKRR (68 aa)) enclose the KH domain. Positions 457-540 (VAAPTPTPAP…KQTFDNFDDL (84 aa)) are disordered. The segment covering 461-489 (TPTPAPQPTPAPTKVEPVPPPVSVTPKPI) has biased composition (pro residues). Positions 512 to 522 (DDSKTKPEKSS) are enriched in basic and acidic residues. Positions 523 to 540 (AKTNTPQTKQTFDNFDDL) are enriched in polar residues.

This sequence belongs to the NusA family. Monomer. Binds directly to the core enzyme of the DNA-dependent RNA polymerase and to nascent RNA.

It localises to the cytoplasm. Its function is as follows. Participates in both transcription termination and antitermination. The sequence is that of Transcription termination/antitermination protein NusA from Mycoplasma pneumoniae (strain ATCC 29342 / M129 / Subtype 1) (Mycoplasmoides pneumoniae).